Consider the following 136-residue polypeptide: uncharacterized protein (136 aa).

Disordered stretches follow at residues 23–44 (QESLKSRIEDKNGDVASPKEDN) and 56–95 (DGVITSEEGCSSSGEKENSGLCSEESSEEDPEEAEEESAR). Over residues 61-79 (SEEGCSSSGEKENSGLCSE) the composition is skewed to low complexity. Residues 80-91 (ESSEEDPEEAEE) show a composition bias toward acidic residues.

This is an uncharacterized protein from Saccharomyces cerevisiae (strain ATCC 204508 / S288c) (Baker's yeast).